A 530-amino-acid chain; its full sequence is N-acetylmuramoyl-L-alanine amidase (530 aa).

The signal sequence occupies residues 1–22; it reads MKAWGALWIVLGLLLWPEPGAA. Asn-61, Asn-80, and Asn-174 each carry an N-linked (GlcNAc...) asparagine glycan. A Phosphoserine modification is found at Ser-219. N-linked (GlcNAc...) asparagine glycosylation occurs at Asn-335. The N-acetylmuramoyl-L-alanine amidase domain occupies 386–512; sequence FLYVHHTYVP…RQLVLTHCPG (127 aa). His-390 is a Zn(2+) binding site. Cys-399 and Cys-405 are joined by a disulfide. Asn-465 carries N-linked (GlcNAc...) asparagine glycosylation. His-502 and Cys-510 together coordinate Zn(2+).

This sequence belongs to the N-acetylmuramoyl-L-alanine amidase 2 family. Zn(2+) serves as cofactor. In terms of tissue distribution, strongly expressed in liver and fetal liver.

It localises to the secreted. The protein localises to the membrane. It catalyses the reaction Hydrolyzes the link between N-acetylmuramoyl residues and L-amino acid residues in certain cell-wall glycopeptides.. In terms of biological role, may play a scavenger role by digesting biologically active peptidoglycan (PGN) into biologically inactive fragments. Has no direct bacteriolytic activity. The polypeptide is N-acetylmuramoyl-L-alanine amidase (Pglyrp2) (Mus musculus (Mouse)).